The following is a 242-amino-acid chain: Type III pantothenate kinase (242 aa).

Position 7 to 14 (7 to 14) interacts with ATP; the sequence is DLGNSRFK. Substrate contacts are provided by residues Tyr-91 and 98-101; that span reads GVDR. Asp-100 acts as the Proton acceptor in catalysis. Thr-121 contributes to the ATP binding site. Thr-171 contributes to the substrate binding site.

The protein belongs to the type III pantothenate kinase family. Homodimer. The cofactor is NH4(+). K(+) is required as a cofactor.

The protein resides in the cytoplasm. It carries out the reaction (R)-pantothenate + ATP = (R)-4'-phosphopantothenate + ADP + H(+). Its pathway is cofactor biosynthesis; coenzyme A biosynthesis; CoA from (R)-pantothenate: step 1/5. Catalyzes the phosphorylation of pantothenate (Pan), the first step in CoA biosynthesis. This chain is Type III pantothenate kinase, found in Xanthomonas euvesicatoria pv. vesicatoria (strain 85-10) (Xanthomonas campestris pv. vesicatoria).